Reading from the N-terminus, the 289-residue chain is Diaminopimelate epimerase (289 aa).

Substrate-binding residues include Asn-11 and Asn-78. Cys-87 serves as the catalytic Proton donor. Substrate is bound by residues 88 to 89, Asn-163, Asn-199, and 217 to 218; these read GN and ER. Residue Cys-226 is the Proton acceptor of the active site. Substrate is bound at residue 227–228; the sequence is GT.

The protein belongs to the diaminopimelate epimerase family. As to quaternary structure, homodimer.

The protein localises to the cytoplasm. The enzyme catalyses (2S,6S)-2,6-diaminopimelate = meso-2,6-diaminopimelate. It participates in amino-acid biosynthesis; L-lysine biosynthesis via DAP pathway; DL-2,6-diaminopimelate from LL-2,6-diaminopimelate: step 1/1. Its function is as follows. Catalyzes the stereoinversion of LL-2,6-diaminopimelate (L,L-DAP) to meso-diaminopimelate (meso-DAP), a precursor of L-lysine and an essential component of the bacterial peptidoglycan. The chain is Diaminopimelate epimerase from Mycolicibacterium gilvum (strain PYR-GCK) (Mycobacterium gilvum (strain PYR-GCK)).